The following is a 588-amino-acid chain: Neuropeptide-like 1 (588 aa).

Positions 1-179 (MQCIPKKTFM…DPEVLEYSPD (179 aa)) are excised as a propeptide. The tract at residues 115–143 (NGDLPITIQERESDNDDEEKRSASSSDNV) is disordered. Threonine 194 carries the post-translational modification Threonine amide. A serine amide mark is found at serine 210, serine 227, and serine 244. Tyrosine 260 is modified (tyrosine amide). Position 281 is a glutamic acid 1-amide (glutamate 281). Positions 285 to 299 (SIASLARSGDWPSVA) are excised as a propeptide. The residue at position 318 (tyrosine 318) is a Tyrosine amide. Positions 321–588 (SLSDDREAPS…SNSHIAPRSM (268 aa)) are excised as a propeptide. Residues 342–382 (GNSEGKENEWQATPFTVSEDLDEGKAKNRSNRRIEASQTRH) are disordered.

The protein resides in the secreted. In Camponotus floridanus (Florida carpenter ant), this protein is Neuropeptide-like 1.